Reading from the N-terminus, the 1512-residue chain is Mitogen-activated protein kinase kinase kinase 1 (1512 aa).

Low complexity predominate over residues 1–13 (MAAAAGNRASSSG). 3 disordered regions span residues 1-37 (MAAA…SSAP), 67-181 (SVEL…DRPE), and 213-304 (VKPI…PEET). N-acetylalanine is present on Ala-2. Phosphoserine is present on residues Ser-21 and Ser-35. Composition is skewed to low complexity over residues 81–99 (AASP…ADAA), 129–142 (AAPD…AAAE), and 150–160 (AAEPSPAAAPA). Ser-137 and Ser-154 each carry phosphoserine. Over residues 162–181 (REMENKETLKGLHKMDDRPE) the composition is skewed to basic and acidic residues. A compositionally biased stretch (low complexity) spans 250 to 260 (SPSPGNSPSGR). Phosphoserine is present on Ser-275. At Thr-285 the chain carries Phosphothreonine. Ser-292, Ser-297, and Ser-300 each carry phosphoserine. The SWIM-type zinc finger occupies 338 to 366 (YRVFIGPQNCSCARGTFCIHLLFVMLRVF). Positions 416 to 433 (SNSHTLSSSSTSTSSSEN) are enriched in low complexity. A disordered region spans residues 416–436 (SNSHTLSSSSTSTSSSENSIK). The RING-type zinc finger occupies 443–492 (CPICLLGMLDEESLTVCEDGCRNKLHHHCMSIWAEECRRNREPLICPLCR). Residues Ser-507 and Ser-531 each carry the phosphoserine modification. Disordered stretches follow at residues 511-532 (SPSS…AGSR) and 602-624 (STGN…GSSQ). The segment covering 611 to 624 (GSSPSGGATSGSSQ) has biased composition (low complexity). Ser-923 is subject to Phosphoserine. The interval 933–972 (SISVGPSSSTTTTTTTTEQPKPMVQTKGRPHSQCLNSSPL) is disordered. Positions 939 to 949 (SSSTTTTTTTT) are enriched in low complexity. Ser-1018 carries the post-translational modification Phosphoserine. Basic and acidic residues predominate over residues 1032-1041 (NCPENKDSDK). The interval 1032–1087 (NCPENKDSDKLSPVFTQSRPLPSSNIHRPKPSRPTPGNTSKQGDPSKNSMTLDLNS) is disordered. Ser-1043 carries the post-translational modification Phosphoserine. Polar residues-rich tracts occupy residues 1045-1057 (VFTQ…SSNI) and 1066-1087 (TPGN…DLNS). The 266-residue stretch at 1243-1508 (WLKGQQIGLG…SRELLKHPVF (266 aa)) folds into the Protein kinase domain. ATP is bound by residues 1249–1257 (IGLGAFSSC) and Lys-1272. The active-site Proton acceptor is the Asp-1369. Thr-1400 and Thr-1412 each carry phosphothreonine; by autocatalysis.

Belongs to the protein kinase superfamily. STE Ser/Thr protein kinase family. MAP kinase kinase kinase subfamily. In terms of assembly, binds both upstream activators and downstream substrates in multimolecular complexes through its N-terminus. Oligomerizes after binding MAP2K4 or TRAF2. Interacts with AXIN1. Interacts (via the kinase catalytic domain) with STK38. Interacts with GRIPAP1. The cofactor is Mg(2+). In terms of processing, autophosphorylated.

The catalysed reaction is L-seryl-[protein] + ATP = O-phospho-L-seryl-[protein] + ADP + H(+). It catalyses the reaction L-threonyl-[protein] + ATP = O-phospho-L-threonyl-[protein] + ADP + H(+). The enzyme catalyses S-ubiquitinyl-[E2 ubiquitin-conjugating enzyme]-L-cysteine + [acceptor protein]-L-lysine = [E2 ubiquitin-conjugating enzyme]-L-cysteine + N(6)-ubiquitinyl-[acceptor protein]-L-lysine.. Activated by autophosphorylation on Thr-1400 and Thr-1412 following oligomerization. In terms of biological role, component of a protein kinase signal transduction cascade. Activates the ERK and JNK kinase pathways by phosphorylation of MAP2K1 and MAP2K4. May phosphorylate the MAPK8/JNK1 kinase. Activates CHUK and IKBKB, the central protein kinases of the NF-kappa-B pathway. In Homo sapiens (Human), this protein is Mitogen-activated protein kinase kinase kinase 1 (MAP3K1).